Reading from the N-terminus, the 154-residue chain is 6,7-dimethyl-8-ribityllumazine synthase (154 aa).

5-amino-6-(D-ribitylamino)uracil contacts are provided by residues phenylalanine 23, 57 to 59 (AYE), and 81 to 83 (AVI). Residue 86–87 (GT) coordinates (2S)-2-hydroxy-3-oxobutyl phosphate. The Proton donor role is filled by histidine 89. Phenylalanine 114 contributes to the 5-amino-6-(D-ribitylamino)uracil binding site. Arginine 128 contacts (2S)-2-hydroxy-3-oxobutyl phosphate.

This sequence belongs to the DMRL synthase family. In terms of assembly, forms an icosahedral capsid composed of 60 subunits, arranged as a dodecamer of pentamers.

The enzyme catalyses (2S)-2-hydroxy-3-oxobutyl phosphate + 5-amino-6-(D-ribitylamino)uracil = 6,7-dimethyl-8-(1-D-ribityl)lumazine + phosphate + 2 H2O + H(+). It participates in cofactor biosynthesis; riboflavin biosynthesis; riboflavin from 2-hydroxy-3-oxobutyl phosphate and 5-amino-6-(D-ribitylamino)uracil: step 1/2. Functionally, catalyzes the formation of 6,7-dimethyl-8-ribityllumazine by condensation of 5-amino-6-(D-ribitylamino)uracil with 3,4-dihydroxy-2-butanone 4-phosphate. This is the penultimate step in the biosynthesis of riboflavin. In Acidithiobacillus ferrooxidans (strain ATCC 23270 / DSM 14882 / CIP 104768 / NCIMB 8455) (Ferrobacillus ferrooxidans (strain ATCC 23270)), this protein is 6,7-dimethyl-8-ribityllumazine synthase.